Here is a 318-residue protein sequence, read N- to C-terminus: Aspartate carbamoyltransferase catalytic subunit (318 aa).

Carbamoyl phosphate-binding residues include Arg58 and Thr59. Lys86 contributes to the L-aspartate binding site. Arg108, His141, and Gln144 together coordinate carbamoyl phosphate. Residues Arg174 and Arg226 each contribute to the L-aspartate site. 2 residues coordinate carbamoyl phosphate: Gly270 and Pro271.

It belongs to the aspartate/ornithine carbamoyltransferase superfamily. ATCase family. In terms of assembly, heterododecamer (2C3:3R2) of six catalytic PyrB chains organized as two trimers (C3), and six regulatory PyrI chains organized as three dimers (R2).

The catalysed reaction is carbamoyl phosphate + L-aspartate = N-carbamoyl-L-aspartate + phosphate + H(+). It functions in the pathway pyrimidine metabolism; UMP biosynthesis via de novo pathway; (S)-dihydroorotate from bicarbonate: step 2/3. Its function is as follows. Catalyzes the condensation of carbamoyl phosphate and aspartate to form carbamoyl aspartate and inorganic phosphate, the committed step in the de novo pyrimidine nucleotide biosynthesis pathway. The sequence is that of Aspartate carbamoyltransferase catalytic subunit from Lactobacillus acidophilus (strain ATCC 700396 / NCK56 / N2 / NCFM).